The sequence spans 255 residues: Uracil-DNA glycosylase (255 aa).

Aspartate 90 functions as the Proton acceptor in the catalytic mechanism.

It belongs to the uracil-DNA glycosylase (UDG) superfamily. UNG family.

The protein resides in the host nucleus. It carries out the reaction Hydrolyzes single-stranded DNA or mismatched double-stranded DNA and polynucleotides, releasing free uracil.. Its function is as follows. Excises uracil residues from the DNA which can arise as a result of misincorporation of dUMP residues by DNA polymerase or deamination of cytosines. Therefore may reduce deleterious uracil incorporation into the viral genome, particularly in terminally differentiated cells which lack DNA repair enzymes. The sequence is that of Uracil-DNA glycosylase from Equine herpesvirus 2 (strain 86/87) (EHV-2).